We begin with the raw amino-acid sequence, 249 residues long: DNA polymerase sliding clamp (249 aa).

The protein belongs to the PCNA family. As to quaternary structure, homotrimer. The subunits circularize to form a toroid; DNA passes through its center. Replication factor C (RFC) is required to load the toroid on the DNA.

Sliding clamp subunit that acts as a moving platform for DNA processing. Responsible for tethering the catalytic subunit of DNA polymerase and other proteins to DNA during high-speed replication. The protein is DNA polymerase sliding clamp of Thermococcus fumicolans.